The primary structure comprises 377 residues: 2-iminoacetate synthase (377 aa).

The Radical SAM core domain occupies asparagine 71–arginine 301. [4Fe-4S] cluster contacts are provided by cysteine 85, cysteine 89, and cysteine 92.

This sequence belongs to the radical SAM superfamily. ThiH family. In terms of assembly, forms a heterodimer with ThiG. [4Fe-4S] cluster is required as a cofactor.

It carries out the reaction L-tyrosine + S-adenosyl-L-methionine + NADPH = 2-iminoacetate + 4-methylphenol + 5'-deoxyadenosine + L-methionine + NADP(+). Its pathway is cofactor biosynthesis; thiamine diphosphate biosynthesis. Its function is as follows. Catalyzes the radical-mediated cleavage of tyrosine to 2-iminoacetate and 4-cresol. The sequence is that of 2-iminoacetate synthase (thiH) from Escherichia coli (strain K12).